Reading from the N-terminus, the 132-residue chain is Holo-[acyl-carrier-protein] synthase (132 aa).

2 residues coordinate Mg(2+): Asp8 and Glu57.

It belongs to the P-Pant transferase superfamily. AcpS family. Requires Mg(2+) as cofactor.

It is found in the cytoplasm. The catalysed reaction is apo-[ACP] + CoA = holo-[ACP] + adenosine 3',5'-bisphosphate + H(+). Its function is as follows. Transfers the 4'-phosphopantetheine moiety from coenzyme A to a Ser of acyl-carrier-protein. The polypeptide is Holo-[acyl-carrier-protein] synthase (Methylobacterium nodulans (strain LMG 21967 / CNCM I-2342 / ORS 2060)).